Reading from the N-terminus, the 121-residue chain is Large ribosomal subunit protein bL12 (121 aa).

This sequence belongs to the bacterial ribosomal protein bL12 family. Homodimer. Part of the ribosomal stalk of the 50S ribosomal subunit. Forms a multimeric L10(L12)X complex, where L10 forms an elongated spine to which 2 to 4 L12 dimers bind in a sequential fashion. Binds GTP-bound translation factors.

Functionally, forms part of the ribosomal stalk which helps the ribosome interact with GTP-bound translation factors. Is thus essential for accurate translation. The chain is Large ribosomal subunit protein bL12 from Lachnospira eligens (strain ATCC 27750 / DSM 3376 / VPI C15-48 / C15-B4) (Eubacterium eligens).